Here is a 97-residue protein sequence, read N- to C-terminus: Putative CC-type chemokine U83 (97 aa).

Disulfide bonds link Cys32–Cys62 and Cys33–Cys76.

This sequence belongs to the intercrine beta (chemokine CC) family. Highly divergent.

This Homo sapiens (Human) protein is Putative CC-type chemokine U83 (U83).